The following is a 240-amino-acid chain: Glyceraldehyde 3-phosphate phosphatase (240 aa).

Belongs to the HAD-like hydrolase superfamily. Requires Mg(2+) as cofactor.

Its function is as follows. Catalyzes the dephosphorylation of D,L-glyceraldehyde 3-phosphate in vitro. The polypeptide is Glyceraldehyde 3-phosphate phosphatase (Pyrococcus furiosus (strain ATCC 43587 / DSM 3638 / JCM 8422 / Vc1)).